Reading from the N-terminus, the 459-residue chain is Cysteine--tRNA ligase (459 aa).

Cysteine 29 lines the Zn(2+) pocket. Residues 31 to 41 carry the 'HIGH' region motif; it reads PTVYDRAHIGN. Residues cysteine 209, histidine 234, and glutamate 238 each contribute to the Zn(2+) site. Residues 267–271 carry the 'KMSKS' region motif; the sequence is KMSKS. Position 270 (lysine 270) interacts with ATP.

It belongs to the class-I aminoacyl-tRNA synthetase family. As to quaternary structure, monomer. Requires Zn(2+) as cofactor.

The protein resides in the cytoplasm. The enzyme catalyses tRNA(Cys) + L-cysteine + ATP = L-cysteinyl-tRNA(Cys) + AMP + diphosphate. This Rhodospirillum rubrum (strain ATCC 11170 / ATH 1.1.1 / DSM 467 / LMG 4362 / NCIMB 8255 / S1) protein is Cysteine--tRNA ligase.